Here is a 687-residue protein sequence, read N- to C-terminus: MKTKIIIYICIWATAWAIPVPQLVPLERDIVEKSADVPFLAHPGTAAQNELHINNATNDDSPKGSELGRQVHSNGGYERDRNGSESIAVGGKSSPTQPILANAQGNSAKEREDVETYGHDGIHAGGENSTANGIRGQVGIAENAEEAKESKVHGQPHQDTKTGLASDTSQNGDATLVQENEPQVAGSKNSTNHEVGTHGSGVAAQETTPQREGEGSENQGAEVTPSIGEGAGLDNTEGSPSGNGIEEDEDTGSGDGVGADAGDGRESHDGTEGHEGQSSGGNNDNRGQGSVSTEDDDSKEQEGSPNGRGGDNTSSSEETGIEEGDGTQTTQDNQNLSPTEGGIISQAEACPSGQSQNQGLETEGSSTGNKSSITKESGKLSGSKDSNGHHGMELDKRNSPKQGESDKPQGAAEKSDTHNNMGHSRIGSSSNSDGHDSYDFDDESMQGDDPNSSDESNGSDGSDDANSESAIENGNHGDASYTSDESSDNGSDSDSHAGEDDSSDDTSDTDDSDSNGDDDSESKDKDESDNSNHDNDSDSESKSDSSDSDSDSSDSSDSSDSSDSSETSDSSDSSDTSDSSDSSDSSDSSNSSDTSDSSDSSDGDSSDGDSSDSDSSDSDSSNSSDSDSSDSSDSSSSDSSDSDSDSKDSTSDSSDDNSKSGNGNSDSDSDSDSDSEGSDSNHSTSDD.

Residues 1–17 form the signal peptide; sequence MKTKIIIYICIWATAWA. Residues 54-113 are disordered; the sequence is NNATNDDSPKGSELGRQVHSNGGYERDRNGSESIAVGGKSSPTQPILANAQGNSAKERED. Residue asparagine 55 is glycosylated (N-linked (GlcNAc...) asparagine). A Phosphothreonine; by CK2 modification is found at threonine 57. N-linked (GlcNAc...) asparagine glycosylation occurs at asparagine 82. Residues 93 to 107 are compositionally biased toward polar residues; it reads SSPTQPILANAQGNS. Asparagine 128 carries N-linked (GlcNAc...) asparagine glycosylation. Residues 146–160 show a composition bias toward basic and acidic residues; it reads EAKESKVHGQPHQDT. A disordered region spans residues 146–687; that stretch reads EAKESKVHGQ…SDSNHSTSDD (542 aa). Over residues 161 to 194 the composition is skewed to polar residues; it reads KTGLASDTSQNGDATLVQENEPQVAGSKNSTNHE. Asparagine 189 carries N-linked (GlcNAc...) asparagine glycosylation. Serine 226 is modified (phosphoserine; by CK2). At serine 253 the chain carries Phosphoserine; by CK1. The segment covering 262-275 has biased composition (basic and acidic residues); that stretch reads GDGRESHDGTEGHE. Over residues 276-292 the composition is skewed to polar residues; it reads GQSSGGNNDNRGQGSVS. Serine 278 is subject to Phosphoserine; by CK1. A Phosphoserine; by CK2 modification is found at serine 292. Residue serine 298 is modified to Phosphoserine; by CK1. Asparagine 312 carries N-linked (GlcNAc...) asparagine glycosylation. A Phosphoserine; by CK2 modification is found at serine 315. A phosphothreonine; by CK2 mark is found at threonine 319 and threonine 329. Residues serine 337 and serine 345 each carry the phosphoserine; by CK2 modification. The span at 352-375 shows a compositional bias: polar residues; sequence SGQSQNQGLETEGSSTGNKSSITK. A Phosphoserine; by CK1 modification is found at serine 366. N-linked (GlcNAc...) asparagine glycosylation occurs at asparagine 369. Residues 386–417 show a composition bias toward basic and acidic residues; the sequence is SNGHHGMELDKRNSPKQGESDKPQGAAEKSDT. Polar residues predominate over residues 418 to 432; the sequence is HNNMGHSRIGSSSNS. Residues 447–460 are compositionally biased toward low complexity; that stretch reads GDDPNSSDESNGSD. The segment covering 500–521 has biased composition (acidic residues); that stretch reads DDSSDDTSDTDDSDSNGDDDSE. Over residues 522-545 the composition is skewed to basic and acidic residues; it reads SKDKDESDNSNHDNDSDSESKSDS. Residues 555–598 show a composition bias toward low complexity; sequence SSDSSDSSDSSETSDSSDSSDTSDSSDSSDSSDSSNSSDTSDSS. A compositionally biased stretch (acidic residues) spans 599–617; sequence DSSDGDSSDGDSSDSDSSD. Low complexity predominate over residues 618 to 639; it reads SDSSNSSDSDSSDSSDSSSSDS. The span at 667-677 shows a compositional bias: acidic residues; sequence SDSDSDSDSEG. A compositionally biased stretch (low complexity) spans 678–687; that stretch reads SDSNHSTSDD.

As to quaternary structure, interacts with FBLN7. In terms of processing, DSP is glycosylated. Specifically expressed in teeth, mainly in odontoblasts and transiently in pre-ameloblasts.

It localises to the secreted. It is found in the extracellular space. The protein localises to the extracellular matrix. DSP may be an important factor in dentinogenesis. DPP may bind high amount of calcium and facilitate initial mineralization of dentin matrix collagen as well as regulate the size and shape of the crystals. This Rattus norvegicus (Rat) protein is Dentin sialophosphoprotein (Dspp).